Here is a 180-residue protein sequence, read N- to C-terminus: Membrane protein UL121 (180 aa).

Positions 1–27 (MWGCGWSRILVLLLLMCMALMARGTYG) are cleaved as a signal peptide. The chain crosses the membrane as a helical span at residues 143–163 (LGLLYAVCLILSFSIVTAALW).

It belongs to the HHV-5 UL121 protein family.

It localises to the host membrane. This is Membrane protein UL121 (UL121) from Human cytomegalovirus (strain Merlin) (HHV-5).